Here is a 459-residue protein sequence, read N- to C-terminus: Argininosuccinate lyase (459 aa).

The protein belongs to the lyase 1 family. Argininosuccinate lyase subfamily.

Its subcellular location is the cytoplasm. The catalysed reaction is 2-(N(omega)-L-arginino)succinate = fumarate + L-arginine. The protein operates within amino-acid biosynthesis; L-arginine biosynthesis; L-arginine from L-ornithine and carbamoyl phosphate: step 3/3. This chain is Argininosuccinate lyase, found in Staphylococcus aureus (strain bovine RF122 / ET3-1).